Reading from the N-terminus, the 282-residue chain is NADPH-dependent 7-cyano-7-deazaguanine reductase (282 aa).

A substrate-binding site is contributed by 90 to 92; sequence IES. 92–93 contacts NADPH; the sequence is SK. C190 (thioimide intermediate) is an active-site residue. D197 serves as the catalytic Proton donor. Residue 229–230 coordinates substrate; it reads HE. 258–259 contacts NADPH; sequence RG.

The protein belongs to the GTP cyclohydrolase I family. QueF type 2 subfamily. In terms of assembly, homodimer.

It is found in the cytoplasm. It carries out the reaction 7-aminomethyl-7-carbaguanine + 2 NADP(+) = 7-cyano-7-deazaguanine + 2 NADPH + 3 H(+). It participates in tRNA modification; tRNA-queuosine biosynthesis. In terms of biological role, catalyzes the NADPH-dependent reduction of 7-cyano-7-deazaguanine (preQ0) to 7-aminomethyl-7-deazaguanine (preQ1). This is NADPH-dependent 7-cyano-7-deazaguanine reductase from Aeromonas salmonicida (strain A449).